The chain runs to 261 residues: Glucanase inhibitor protein 3 (261 aa).

Positions 1–21 (MKVLSSLAAALIALSAVDVEA) are cleaved as a signal peptide. One can recognise a Peptidase S1 domain in the interval 29–260 (ILGGGKVPVG…GIEWINSVIK (232 aa)). A disulfide bridge links Cys56 with Cys72. N-linked (GlcNAc...) asparagine glycosylation occurs at Asn108. 2 disulfide bridges follow: Cys183-Cys195 and Cys205-Cys236.

Belongs to the peptidase S1 family.

The protein localises to the secreted. Secreted effector that suppresses host plant glucan elicitor-mediated defense responses. Targets host endoglucanases and inhibits the endoglucanase-mediated release of elicitor-active glucan oligosaccharides from P.sojae cell walls. The protein is Glucanase inhibitor protein 3 (GIP3) of Phytophthora sojae (strain P6497) (Soybean stem and root rot agent).